The sequence spans 175 residues: Methylated-DNA--protein-cysteine methyltransferase (175 aa).

Cysteine 142 (nucleophile; methyl group acceptor) is an active-site residue.

It belongs to the MGMT family.

Its subcellular location is the cytoplasm. The enzyme catalyses a 6-O-methyl-2'-deoxyguanosine in DNA + L-cysteinyl-[protein] = S-methyl-L-cysteinyl-[protein] + a 2'-deoxyguanosine in DNA. It catalyses the reaction a 4-O-methyl-thymidine in DNA + L-cysteinyl-[protein] = a thymidine in DNA + S-methyl-L-cysteinyl-[protein]. Functionally, involved in the cellular defense against the biological effects of O6-methylguanine (O6-MeG) and O4-methylthymine (O4-MeT) in DNA. Repairs the methylated nucleobase in DNA by stoichiometrically transferring the methyl group to a cysteine residue in the enzyme. This is a suicide reaction: the enzyme is irreversibly inactivated. The polypeptide is Methylated-DNA--protein-cysteine methyltransferase (Thermococcus barophilus (strain DSM 11836 / MP)).